Consider the following 97-residue polypeptide: MSDSLWHLYLLRTTSGMLYTGITTDVARRLTQHQAGKGAKALRGKGELALVFHCEAGDRSTALKLEYRVKQLSKQQKEKLVMNQPSSLVSLLDVRTD.

Residues 4-79 enclose the GIY-YIG domain; sequence SLWHLYLLRT…KQLSKQQKEK (76 aa).

The protein belongs to the UPF0213 family.

This is UPF0213 protein YE0453 from Yersinia enterocolitica serotype O:8 / biotype 1B (strain NCTC 13174 / 8081).